Consider the following 330-residue polypeptide: Aspartate--ammonia ligase (330 aa).

It belongs to the class-II aminoacyl-tRNA synthetase family. AsnA subfamily.

The protein resides in the cytoplasm. It carries out the reaction L-aspartate + NH4(+) + ATP = L-asparagine + AMP + diphosphate + H(+). It functions in the pathway amino-acid biosynthesis; L-asparagine biosynthesis; L-asparagine from L-aspartate (ammonia route): step 1/1. The sequence is that of Aspartate--ammonia ligase from Streptococcus uberis (strain ATCC BAA-854 / 0140J).